The following is a 45-amino-acid chain: uncharacterized protein (45 aa).

Positions Arg18–Ser45 are disordered.

This is an uncharacterized protein from Homo sapiens (Human).